Reading from the N-terminus, the 214-residue chain is 3-isopropylmalate dehydratase small subunit (214 aa).

Belongs to the LeuD family. LeuD type 1 subfamily. In terms of assembly, heterodimer of LeuC and LeuD.

It carries out the reaction (2R,3S)-3-isopropylmalate = (2S)-2-isopropylmalate. It participates in amino-acid biosynthesis; L-leucine biosynthesis; L-leucine from 3-methyl-2-oxobutanoate: step 2/4. In terms of biological role, catalyzes the isomerization between 2-isopropylmalate and 3-isopropylmalate, via the formation of 2-isopropylmaleate. The chain is 3-isopropylmalate dehydratase small subunit from Alcanivorax borkumensis (strain ATCC 700651 / DSM 11573 / NCIMB 13689 / SK2).